Consider the following 778-residue polypeptide: Jhy protein homolog (778 aa).

Disordered stretches follow at residues Asp62–Asp271, Gln334–Ser408, Glu631–Asp654, and Ile721–Glu746. Basic and acidic residues predominate over residues Pro118 to Gly139. Residues Ser223 to Ser234 show a composition bias toward low complexity. The span at Gln334 to Pro344 shows a compositional bias: polar residues. Basic residues predominate over residues Ser358–Lys371. Polar residues predominate over residues Gly375–Gly389. The segment covering Asn390 to Asn402 has biased composition (low complexity). Over residues Gly633–Tyr650 the composition is skewed to basic residues. The segment covering Ala733 to Glu746 has biased composition (basic and acidic residues).

In terms of biological role, required for the normal development of cilia in brain ependymal cells lining the ventricular surfaces. The chain is Jhy protein homolog from Homo sapiens (Human).